The following is a 511-amino-acid chain: NADH-ubiquinone oxidoreductase chain 4 (511 aa).

A run of 14 helical transmembrane segments spans residues 1–21 (MNQI…IIII), 39–59 (ISLL…YLFN), 78–98 (IDGI…ISLI), 116–136 (VLLI…LDLI), 137–157 (TFYI…GKLG), 186–206 (YIFI…GIYI), 220–240 (IILS…GILV), 264–284 (IILA…LILI), 289–309 (VIII…FYIG), 318–338 (IKVI…MSIF), 349–369 (LLIS…VGGI), 388–408 (YMPI…GIPL), 422–442 (IFIY…ITTI), and 476–496 (LLLN…NLII).

It belongs to the complex I subunit 4 family.

The protein localises to the mitochondrion membrane. It carries out the reaction a ubiquinone + NADH + 5 H(+)(in) = a ubiquinol + NAD(+) + 4 H(+)(out). Core subunit of the mitochondrial membrane respiratory chain NADH dehydrogenase (Complex I) that is believed to belong to the minimal assembly required for catalysis. Complex I functions in the transfer of electrons from NADH to the respiratory chain. The immediate electron acceptor for the enzyme is believed to be ubiquinone. The chain is NADH-ubiquinone oxidoreductase chain 4 (ND4) from Wickerhamomyces canadensis (Yeast).